The following is a 199-amino-acid chain: Thymidylate kinase (199 aa).

Position 7 to 14 (7 to 14) interacts with ATP; sequence GTEGVGKT.

Belongs to the thymidylate kinase family.

The enzyme catalyses dTMP + ATP = dTDP + ADP. Phosphorylation of dTMP to form dTDP in both de novo and salvage pathways of dTTP synthesis. The chain is Thymidylate kinase from Acinetobacter baumannii (strain AB307-0294).